The primary structure comprises 232 residues: Pirin-like protein CC_1473 (232 aa).

It belongs to the pirin family.

The sequence is that of Pirin-like protein CC_1473 from Caulobacter vibrioides (strain ATCC 19089 / CIP 103742 / CB 15) (Caulobacter crescentus).